Here is a 464-residue protein sequence, read N- to C-terminus: Calcitonin gene-related peptide type 1 receptor (464 aa).

The signal sequence occupies residues 1–23 (MMDKKCTLCFLFLLLLNMALIAA). Residues 24–139 (ESEEGANQTD…STHEKVKTAL (116 aa)) lie on the Extracellular side of the membrane. Residues Asn-30, Asn-66, Asn-118, Asn-123, Asn-128, and Asn-129 are each glycosylated (N-linked (GlcNAc...) asparagine). 3 cysteine pairs are disulfide-bonded: Cys-48-Cys-74, Cys-65-Cys-105, and Cys-88-Cys-127. The chain crosses the membrane as a helical span at residues 140–164 (NLFYLTIIGHGLSIASLIISLIIFF). The Cytoplasmic portion of the chain corresponds to 165-175 (YFKSLSCQRIT). Residues 176–198 (LHKNLFFSFVCNSIVTIIHLTAV) form a helical membrane-spanning segment. Topologically, residues 199–209 (ANNQALVATNP) are extracellular. The chain crosses the membrane as a helical span at residues 210-238 (VSCKVSQFIHLYLMGCNYFWMLCEGIYLH). The Cytoplasmic portion of the chain corresponds to 239-252 (TLIVVAVFAEKQHL). The helical transmembrane segment at 253-273 (MWYYFLGWGFPLLPACIHAIA) threads the bilayer. Residues 274 to 289 (RSLYYNDNCWISSDTH) lie on the Extracellular side of the membrane. Residues 288 to 289 (TH) form a required for RAMP3 interaction region. The helical transmembrane segment at 290 to 314 (LLYIIHGPICAALLVNLFFLLNIVR) threads the bilayer. Residues 315–329 (VLITKLKVTHQAESN) are Cytoplasmic-facing. Residues 330–351 (LYMKAVRATLILVPLLGIEFVL) traverse the membrane as a helical segment. Topologically, residues 352-366 (FPWRPEGKVAEEVYD) are extracellular. The chain crosses the membrane as a helical span at residues 367-387 (YVMHILMHYQGLLVSTIFCFF). Topologically, residues 388–464 (NGEVQAILRR…KPEKMYDLVM (77 aa)) are cytoplasmic. Ser-420 and Ser-445 each carry phosphoserine.

The protein belongs to the G-protein coupled receptor 2 family. Heterodimer of CALCRL and RAMP1; the receptor complex functions as CGRP receptor. Heterodimer of CALCRL and RAMP2 or CALCRL and RAMP3; the complexes function as adrenomedullin receptor.

Its subcellular location is the cell membrane. G protein-coupled receptor which specificity is determined by its interaction with receptor-activity-modifying proteins (RAMPs). Together with RAMP1, form the receptor complex for calcitonin-gene-related peptides CALCA/CGRP1 and CALCB/CGRP2. Together with RAMP2 or RAMP3, function as receptor complexes for adrenomedullin (ADM and ADM2). Ligand binding causes a conformation change that triggers signaling via guanine nucleotide-binding proteins (G proteins) and modulates the activity of downstream effectors. Activates cAMP-dependent pathway. The chain is Calcitonin gene-related peptide type 1 receptor from Rattus norvegicus (Rat).